Consider the following 210-residue polypeptide: ATP-dependent Clp protease proteolytic subunit (210 aa).

The Nucleophile role is filled by serine 106. The active site involves histidine 131.

Belongs to the peptidase S14 family. As to quaternary structure, fourteen ClpP subunits assemble into 2 heptameric rings which stack back to back to give a disk-like structure with a central cavity, resembling the structure of eukaryotic proteasomes.

It localises to the cytoplasm. The catalysed reaction is Hydrolysis of proteins to small peptides in the presence of ATP and magnesium. alpha-casein is the usual test substrate. In the absence of ATP, only oligopeptides shorter than five residues are hydrolyzed (such as succinyl-Leu-Tyr-|-NHMec, and Leu-Tyr-Leu-|-Tyr-Trp, in which cleavage of the -Tyr-|-Leu- and -Tyr-|-Trp bonds also occurs).. In terms of biological role, cleaves peptides in various proteins in a process that requires ATP hydrolysis. Has a chymotrypsin-like activity. Plays a major role in the degradation of misfolded proteins. This chain is ATP-dependent Clp protease proteolytic subunit, found in Bartonella tribocorum (strain CIP 105476 / IBS 506).